Reading from the N-terminus, the 526-residue chain is Microphthalmia-associated transcription factor (526 aa).

The tract at residues 1–54 (MQSESGIVPDFEVGEEFHEEPKTYYELKSQPLKSSSSAEHPGASKPPISSSSMT) is disordered. Ser5 is subject to Phosphoserine; by MTOR. Over residues 15–25 (EEFHEEPKTYY) the composition is skewed to basic and acidic residues. Residues 41–54 (PGASKPPISSSSMT) are compositionally biased toward low complexity. Phosphoserine; by MAPK is present on Ser180. Residues 224 to 295 (DDVIDDIISL…PNIKRELTAC (72 aa)) are transactivation. Ser280 carries the post-translational modification Phosphoserine; by MARK3. Lys289 is covalently cross-linked (Glycyl lysine isopeptide (Lys-Gly) (interchain with G-Cter in SUMO)). One can recognise a bHLH domain in the interval 311-364 (QKKDNHNLIERRRRFNINDRIKELGTLIPKSNDPDMRWNKGTILKASVDYIRKL). Positions 355 to 402 (KASVDYIRKLQREQQRAKELENRQKKLEHANRHLLLRIQELEMQARAH) form a coiled coil. The segment at 374–395 (LENRQKKLEHANRHLLLRIQEL) is leucine-zipper. The segment at 401-431 (AHGLSLIPSTGLCSPDLVNRIIKQEPVLENC) is DNA-binding regulation. Ser405 carries the phosphoserine; by GSK3 modification. Ser414 is subject to Phosphoserine. Residue Lys423 forms a Glycyl lysine isopeptide (Lys-Gly) (interchain with G-Cter in SUMO) linkage. The residue at position 491 (Ser491) is a Phosphoserine. Residues 496–526 (TDPLLSSVSPGASKTSSRRSSMSMEETEHTC) are disordered. The segment covering 499–509 (LLSSVSPGASK) has biased composition (polar residues). Ser516 carries the post-translational modification Phosphoserine; by RPS6KA1.

It belongs to the MiT/TFE family. As to quaternary structure, homodimer or heterodimer; dimerization is mediated via the coiled coil region. Efficient DNA binding requires dimerization with another bHLH protein. Binds DNA in the form of homodimer or heterodimer with either TFE3, TFEB or TFEC. Interacts with small GTPases Rag (RagA/RRAGA, RagB/RRAGB, RagC/RRAGC and/or RagD/RRAGD); promoting its recruitment to lysosomal membrane in the presence of nutrients. Interacts with KARS1. Identified in a complex with HINT1 and CTNNB1. Interacts with VSX2. Post-translationally, when nutrients are present, phosphorylation by MTOR at Ser-5 via non-canonical mTORC1 pathway promotes ubiquitination by the SCF(BTRC) complex, followed by degradation. Phosphorylation at Ser-405 significantly enhances the ability to bind the tyrosinase promoter. Phosphorylation by MARK3/cTAK1 at Ser-280 promotes association with 14-3-3/YWHA adapters and retention in the cytosol. Phosphorylated at Ser-180 and Ser-516 following KIT signaling, triggering a short live activation: Phosphorylation at Ser-180 and Ser-516 by MAPK and RPS6KA1, respectively, activate the transcription factor activity but also promote ubiquitination and subsequent degradation by the proteasome. Phosphorylated in response to blue light (415nm). Ubiquitinated by the SCF(BTRC) and SCF(FBXW11) complexes following phosphorylation ar Ser-5 by MTOR, leading to its degradation by the proteasome. Ubiquitinated following phosphorylation at Ser-180, leading to subsequent degradation by the proteasome. Deubiquitinated by USP13, preventing its degradation. Expressed in melanocytes (at protein level). In terms of tissue distribution, expressed in the retinal pigment epithelium, brain, and placenta. Expressed in the kidney. As to expression, expressed in the kidney and retinal pigment epithelium. Expressed in the kidney. In terms of tissue distribution, expressed in melanocytes.

It localises to the nucleus. The protein localises to the cytoplasm. Its subcellular location is the lysosome membrane. In terms of biological role, transcription factor that acts as a master regulator of melanocyte survival and differentiation as well as melanosome biogenesis. Binds to M-boxes (5'-TCATGTG-3') and symmetrical DNA sequences (E-boxes) (5'-CACGTG-3') found in the promoter of pigmentation genes, such as tyrosinase (TYR). Involved in the cellular response to amino acid availability by acting downstream of MTOR: in the presence of nutrients, MITF phosphorylation by MTOR promotes its inactivation. Upon starvation or lysosomal stress, inhibition of MTOR induces MITF dephosphorylation, resulting in transcription factor activity. Plays an important role in melanocyte development by regulating the expression of tyrosinase (TYR) and tyrosinase-related protein 1 (TYRP1). Plays a critical role in the differentiation of various cell types, such as neural crest-derived melanocytes, mast cells, osteoclasts and optic cup-derived retinal pigment epithelium. The sequence is that of Microphthalmia-associated transcription factor from Homo sapiens (Human).